Here is a 246-residue protein sequence, read N- to C-terminus: Ribonuclease PH (246 aa).

Phosphate is bound by residues arginine 91 and 129 to 131 (GTR).

It belongs to the RNase PH family. In terms of assembly, homohexameric ring arranged as a trimer of dimers.

The enzyme catalyses tRNA(n+1) + phosphate = tRNA(n) + a ribonucleoside 5'-diphosphate. In terms of biological role, phosphorolytic 3'-5' exoribonuclease that plays an important role in tRNA 3'-end maturation. Removes nucleotide residues following the 3'-CCA terminus of tRNAs; can also add nucleotides to the ends of RNA molecules by using nucleoside diphosphates as substrates, but this may not be physiologically important. Probably plays a role in initiation of 16S rRNA degradation (leading to ribosome degradation) during starvation. The protein is Ribonuclease PH of Paraburkholderia phytofirmans (strain DSM 17436 / LMG 22146 / PsJN) (Burkholderia phytofirmans).